The sequence spans 613 residues: Ethylene response sensor 1 (613 aa).

3 helical membrane passes run 23 to 43 (ISDA…IYFV), 58 to 78 (FGAF…MFFM), and 95 to 115 (AVVS…LLSV). Cu cation contacts are provided by Cys-65 and His-69. Positions 158-307 (DRHTILRTTL…NVADQVAVAL (150 aa)) constitute a GAF domain. The Histidine kinase domain maps to 350–589 (VMNHEMRTPM…SFIIRLGICN (240 aa)). Position 353 is a phosphohistidine; by autocatalysis (His-353).

The protein belongs to the ethylene receptor family. Homodimer; disulfide-linked. Heteromer with ETR1. Requires Cu cation as cofactor. In terms of processing, autophosphorylated on both His and Ser residues in the presence of manganese. Loss of His autophosphorylation in the presence of both manganese and magnesium. As to expression, expressed in etiolated seedlings, leaves, stems, roots, flowers, embryos, anthers, carpels and ovules.

The protein resides in the endoplasmic reticulum membrane. The enzyme catalyses ATP + protein L-histidine = ADP + protein N-phospho-L-histidine.. Functionally, ethylene receptor related to bacterial two-component regulators. Acts as a redundant negative regulator of ethylene signaling. The chain is Ethylene response sensor 1 (ERS1) from Arabidopsis thaliana (Mouse-ear cress).